Reading from the N-terminus, the 570-residue chain is Proline--tRNA ligase (570 aa).

It belongs to the class-II aminoacyl-tRNA synthetase family. ProS type 1 subfamily. Homodimer.

It is found in the cytoplasm. The catalysed reaction is tRNA(Pro) + L-proline + ATP = L-prolyl-tRNA(Pro) + AMP + diphosphate. Functionally, catalyzes the attachment of proline to tRNA(Pro) in a two-step reaction: proline is first activated by ATP to form Pro-AMP and then transferred to the acceptor end of tRNA(Pro). As ProRS can inadvertently accommodate and process non-cognate amino acids such as alanine and cysteine, to avoid such errors it has two additional distinct editing activities against alanine. One activity is designated as 'pretransfer' editing and involves the tRNA(Pro)-independent hydrolysis of activated Ala-AMP. The other activity is designated 'posttransfer' editing and involves deacylation of mischarged Ala-tRNA(Pro). The misacylated Cys-tRNA(Pro) is not edited by ProRS. The sequence is that of Proline--tRNA ligase from Clostridium perfringens (strain ATCC 13124 / DSM 756 / JCM 1290 / NCIMB 6125 / NCTC 8237 / Type A).